Reading from the N-terminus, the 875-residue chain is Leucine--tRNA ligase (875 aa).

The 'HIGH' region signature appears at 43 to 53; the sequence is PYPSGRIHMGH. Residues 633-637 carry the 'KMSKS' region motif; it reads KMSKS. Position 636 (K636) interacts with ATP.

This sequence belongs to the class-I aminoacyl-tRNA synthetase family.

Its subcellular location is the cytoplasm. The catalysed reaction is tRNA(Leu) + L-leucine + ATP = L-leucyl-tRNA(Leu) + AMP + diphosphate. In Bartonella bacilliformis (strain ATCC 35685 / KC583 / Herrer 020/F12,63), this protein is Leucine--tRNA ligase.